A 407-amino-acid polypeptide reads, in one-letter code: GTPase Obg (407 aa).

The 159-residue stretch at 1-159 (MKFVDEVSIR…RDLKLEMKVL (159 aa)) folds into the Obg domain. The interval 128-148 (TRFKSSTNRAPRQTTPGKPGE) is disordered. The span at 129–143 (RFKSSTNRAPRQTTP) shows a compositional bias: polar residues. The OBG-type G domain maps to 160-333 (ADVGLLGLPN…LTRDIMRYLE (174 aa)). Residues 166–173 (GLPNAGKS), 191–195 (FTTLV), 213–216 (DIPG), 283–286 (NKCD), and 314–316 (SAI) each bind GTP. Mg(2+)-binding residues include S173 and T193. Positions 376–407 (SGVKSVHDIGDDDWDEEDVDDEDGPEIIYVRD) are disordered. Positions 385 to 400 (GDDDWDEEDVDDEDGP) are enriched in acidic residues.

This sequence belongs to the TRAFAC class OBG-HflX-like GTPase superfamily. OBG GTPase family. Monomer. Requires Mg(2+) as cofactor.

Its subcellular location is the cytoplasm. An essential GTPase which binds GTP, GDP and possibly (p)ppGpp with moderate affinity, with high nucleotide exchange rates and a fairly low GTP hydrolysis rate. Plays a role in control of the cell cycle, stress response, ribosome biogenesis and in those bacteria that undergo differentiation, in morphogenesis control. This Pseudomonas fluorescens (strain Pf0-1) protein is GTPase Obg.